Consider the following 201-residue polypeptide: Recombination protein RecR (201 aa).

The segment at 57-72 adopts a C4-type zinc-finger fold; that stretch reads CQQCRNFTEEALCEIC. The 96-residue stretch at 81–176 folds into the Toprim domain; the sequence is TTLCIVETPG…NISRIAHGVP (96 aa).

This sequence belongs to the RecR family.

Functionally, may play a role in DNA repair. It seems to be involved in an RecBC-independent recombinational process of DNA repair. It may act with RecF and RecO. The protein is Recombination protein RecR of Colwellia psychrerythraea (strain 34H / ATCC BAA-681) (Vibrio psychroerythus).